Here is a 322-residue protein sequence, read N- to C-terminus: Putative membrane-bound redox modulator Alx (322 aa).

Residues 1–6 (MNTVGT) are Periplasmic-facing. The helical transmembrane segment at 7–27 (PLLWGGFAVVVVIMLSIDLLL) threads the bilayer. Topologically, residues 28-43 (QGRRGAHAMSMKQAAG) are cytoplasmic. Residues 44–64 (WSILWVTLSLLFNAAFWWYLA) form a helical membrane-spanning segment. The Periplasmic portion of the chain corresponds to 65–89 (ETQGREVADPQALAFLTGYLIEKSL). The helical transmembrane segment at 90–110 (AVDNVFVWLMLFSYFSVPPAL) threads the bilayer. The Cytoplasmic portion of the chain corresponds to 111 to 113 (QRR). A helical membrane pass occupies residues 114–134 (VLVYGVLGAIVLRTIMIFAGT). Tryptophan 135 is a topological domain (periplasmic). Residues 136-156 (LITQFEWLLYVFGAFLLFTGV) form a helical membrane-spanning segment. Residues 157-198 (KMALAKEDESGIGEKPMVRWLRGHLRMTDTIENEHFFVRKNG) lie on the Cytoplasmic side of the membrane. Residues 199–219 (LLYATPLLLVLIMVEFSDVIF) traverse the membrane as a helical segment. Over 220 to 225 (AVDSIP) the chain is Periplasmic. Residues 226 to 246 (AIFAVTTDPFIVLTSNLFAIL) form a helical membrane-spanning segment. The Cytoplasmic segment spans residues 247–261 (GLRAMYFLLSGVAER). A helical membrane pass occupies residues 262–282 (FSMLKYGLAVILVFIGIKMLI). Over 283–286 (VDFY) the chain is Periplasmic. A helical membrane pass occupies residues 287–307 (HIPIAISLGVVFGILTITLVI). Residues 308 to 321 (NTWVNHQRDKKLRA) lie on the Cytoplasmic side of the membrane.

It belongs to the TerC family.

It is found in the cell inner membrane. Has been proposed to be a redox modulator. This Salmonella typhi protein is Putative membrane-bound redox modulator Alx (alx).